We begin with the raw amino-acid sequence, 435 residues long: Arginine biosynthesis bifunctional protein ArgJ, mitochondrial (435 aa).

Substrate contacts are provided by T179, K205, T216, E302, N430, and S435. The active-site Nucleophile is the T216.

Belongs to the ArgJ family. As to quaternary structure, heterodimer of an alpha and a beta chain. Post-translationally, the alpha and beta chains are autoproteolytically processed from a single precursor protein within the mitochondrion.

The protein localises to the mitochondrion matrix. The enzyme catalyses N(2)-acetyl-L-ornithine + L-glutamate = N-acetyl-L-glutamate + L-ornithine. It catalyses the reaction L-glutamate + acetyl-CoA = N-acetyl-L-glutamate + CoA + H(+). Its pathway is amino-acid biosynthesis; L-arginine biosynthesis; L-ornithine and N-acetyl-L-glutamate from L-glutamate and N(2)-acetyl-L-ornithine (cyclic): step 1/1. It participates in amino-acid biosynthesis; L-arginine biosynthesis; N(2)-acetyl-L-ornithine from L-glutamate: step 1/4. Its function is as follows. Catalyzes two activities which are involved in the cyclic version of arginine biosynthesis: the synthesis of acetylglutamate from glutamate and acetyl-CoA, and of ornithine by transacetylation between acetylornithine and glutamate. In Schizosaccharomyces japonicus (strain yFS275 / FY16936) (Fission yeast), this protein is Arginine biosynthesis bifunctional protein ArgJ, mitochondrial.